The chain runs to 103 residues: Small ribosomal subunit protein uS10 (103 aa).

Belongs to the universal ribosomal protein uS10 family. In terms of assembly, part of the 30S ribosomal subunit.

In terms of biological role, involved in the binding of tRNA to the ribosomes. In Saccharophagus degradans (strain 2-40 / ATCC 43961 / DSM 17024), this protein is Small ribosomal subunit protein uS10.